Consider the following 372-residue polypeptide: Transaldolase 2 (372 aa).

K140 (schiff-base intermediate with substrate) is an active-site residue.

Belongs to the transaldolase family. Type 2 subfamily.

Its subcellular location is the cytoplasm. The enzyme catalyses D-sedoheptulose 7-phosphate + D-glyceraldehyde 3-phosphate = D-erythrose 4-phosphate + beta-D-fructose 6-phosphate. Its pathway is carbohydrate degradation; pentose phosphate pathway; D-glyceraldehyde 3-phosphate and beta-D-fructose 6-phosphate from D-ribose 5-phosphate and D-xylulose 5-phosphate (non-oxidative stage): step 2/3. Functionally, transaldolase is important for the balance of metabolites in the pentose-phosphate pathway. This is Transaldolase 2 from Streptomyces avermitilis (strain ATCC 31267 / DSM 46492 / JCM 5070 / NBRC 14893 / NCIMB 12804 / NRRL 8165 / MA-4680).